The primary structure comprises 749 residues: MVLPTVLILLLSWAAGLGGQYGNPLNKYIRHYEGLSYNVDSLHQKHQRAKRAVSHEDQFLLLDFHAHGRQFNLRMKRDTSLFSDEFKVETSNKVLDYDTSHIYTGHIYGEEGSFSHGSVIDGRFEGFIKTRGGTFYIEPAERYIKDRILPFHSVIYHEDDINYPHKYGPQGGCADHSVFERMRKYQMTGVEEGARAHPEKHAASSGPELLRKKRTTLAERNTCQLYIQTDHLFFKYYGTREAVIAQISSHVKAIDTIYQTTDFSGIRNISFMVKRIRINTTSDEKDPTNPFRFPNIGVEKFLELNSEQNHDDYCLAYVFTDRDFDDGVLGLAWVGAPSGSSGGICEKSKLYSDGKKKSLNTGIITVQNYGSHVPPKVSHITFAHEVGHNFGSPHDSGTECTPGESKNLGQKENGNYIMYARATSGDKLNNNKFSLCSIRNISQVLEKKRNNCFVESGQPICGNGMVEQGEECDCGYSDQCKDDCCFDANQPEGKKCKLKPGKQCSPSQGPCCTAQCAFKSKSEKCRDDSDCAKEGICNGFTALCPASDPKPNFTDCNRHTQVCINGQCAGSICEKYDLEECTCASSDGKDDKELCHVCCMKKMAPSTCASTGSLQWSKQFSGRTITLQPGSPCNDFRGYCDVFMRCRLVDADGPLARLKKAIFSPQLYENIAEWIVAHWWAVLLMGIALIMLMAGFIKICSVHTPSSNPKLPPPKPLPGTLKRRRPPQPIQQPPRQRPRESYQMGHMRR.

The N-terminal stretch at 1-19 (MVLPTVLILLLSWAAGLGG) is a signal peptide. Residues 20 to 214 (QYGNPLNKYI…SGPELLRKKR (195 aa)) constitute a propeptide that is removed on maturation. The Extracellular segment spans residues 20–673 (QYGNPLNKYI…SPQLYENIAE (654 aa)). The Cysteine switch signature appears at 171–178 (GGCADHSV). Residue cysteine 173 coordinates Zn(2+). The region spanning 221–457 (NTCQLYIQTD…KRNNCFVESG (237 aa)) is the Peptidase M12B domain. Cystine bridges form between cysteine 223–cysteine 314, cysteine 345–cysteine 452, cysteine 400–cysteine 436, cysteine 461–cysteine 496, cysteine 472–cysteine 485, cysteine 474–cysteine 480, cysteine 484–cysteine 516, cysteine 504–cysteine 512, cysteine 511–cysteine 537, cysteine 525–cysteine 544, cysteine 531–cysteine 563, cysteine 556–cysteine 568, cysteine 573–cysteine 599, cysteine 581–cysteine 608, cysteine 583–cysteine 598, cysteine 595–cysteine 640, and cysteine 633–cysteine 646. N-linked (GlcNAc...) asparagine glycans are attached at residues asparagine 268 and asparagine 279. Residue histidine 384 participates in Zn(2+) binding. Glutamate 385 is an active-site residue. The Zn(2+) site is built by histidine 388 and histidine 394. N-linked (GlcNAc...) asparagine glycosylation is present at asparagine 440. The 95-residue stretch at 458–552 (QPICGNGMVE…LCPASDPKPN (95 aa)) folds into the Disintegrin domain. N-linked (GlcNAc...) asparagine glycosylation is present at asparagine 552. The helical transmembrane segment at 674–694 (WIVAHWWAVLLMGIALIMLMA) threads the bilayer. Residues 695–749 (GFIKICSVHTPSSNPKLPPPKPLPGTLKRRRPPQPIQQPPRQRPRESYQMGHMRR) are Cytoplasmic-facing. The interval 705-749 (PSSNPKLPPPKPLPGTLKRRRPPQPIQQPPRQRPRESYQMGHMRR) is disordered. The SH3-binding signature appears at 709-716 (PKLPPPKP). Phosphothreonine is present on threonine 720. The short motif at 723–729 (RRRPPQP) is the SH3-binding element. Residues 735–749 (RQRPRESYQMGHMRR) are interaction with AP2A1, AP2A2 and AP2M1.

As to quaternary structure, forms a ternary EFNA5-EPHA3-ADAM10 complex mediating EFNA5 extracellular domain shedding by ADAM10 which regulates the EFNA5-EPHA3 complex internalization and function, the cleavage occurs in trans, with ADAM10 and its substrate being on the membranes of opposing cells. Interacts with the clathrin adapter AP2 complex subunits AP2A1, AP2A2, AP2B1, and AP2M1; this interaction facilitates ADAM10 endocytosis from the plasma membrane during long-term potentiation in hippocampal neurons. Forms a ternary complex composed of ADAM10, EPHA4 and CADH1; within the complex, ADAM10 cleaves CADH1 which disrupts adherens junctions. Interacts with EPHA2. Interacts with NGF in a divalent cation-dependent manner. Interacts with TSPAN14; the interaction promotes ADAM10 maturation and cell surface expression. Interacts with TSPAN5, TSPAN10, TSPAN14, TSPAN15, TSPAN17 and TSPAN33; these interactions regulate ADAM10 substrate specificity, endocytosis and turnover. Interacts (via extracellular domain) with TSPAN33 (via extracellular domain) and (via cytoplasmic domain) with AFDN; interaction with TSPAN33 allows the docking of ADAM10 to zonula adherens through a PDZ11-dependent interaction between TSPAN33 and PLEKHA7 while interaction with AFDN locks ADAM10 at zonula adherens. Interacts with DLG1; this interaction recruits ADAM10 to the cell membrane during long-term depression in hippocampal neurons. Interacts (via extracellular domain) with BACE1 (via extracellular domain). Interacts with FAM171A1. The cofactor is Zn(2+). In terms of processing, the precursor is cleaved by furin and PCSK7. As to expression, expressed in the brain, specifically in neurons and astrocytes (at protein level). Expressed in inner and outer pillar cells of the organ of Corti (at protein level). Expressed in kidney and lung.

The protein localises to the cell membrane. It localises to the golgi apparatus membrane. The protein resides in the cytoplasmic vesicle. Its subcellular location is the clathrin-coated vesicle. It is found in the cell projection. The protein localises to the axon. It localises to the dendrite. The protein resides in the cell junction. Its subcellular location is the adherens junction. It is found in the cytoplasm. The enzyme catalyses Endopeptidase of broad specificity.. Catalytically inactive when the propeptide is intact and associated with the mature enzyme. The disintegrin and cysteine-rich regions modulate access of substrates to exerts an inhibitory effect on the cleavage of ADAM10 substrates. In terms of biological role, transmembrane metalloprotease which mediates the ectodomain shedding of a myriad of transmembrane proteins, including adhesion proteins, growth factor precursors and cytokines being essential for development and tissue homeostasis. Associates with six members of the tetraspanin superfamily TspanC8 which regulate its exit from the endoplasmic reticulum and its substrate selectivity. Cleaves the membrane-bound precursor of TNF-alpha to its mature soluble form. Responsible for the proteolytical release of soluble JAM3 from endothelial cells surface. Responsible for the proteolytic release of several other cell-surface proteins, including heparin-binding epidermal growth-like factor, ephrin-A2, CD44, CDH2 and for constitutive and regulated alpha-secretase cleavage of amyloid precursor protein (APP) at '687-Lys-|-Leu-688'. Contributes to the normal cleavage of the cellular prion protein. Involved in the cleavage of the adhesion molecule L1 at the cell surface and in released membrane vesicles, suggesting a vesicle-based protease activity. Also controls the proteolytic processing of Notch and mediates lateral inhibition during neurogenesis. Required for the development of type 1 transitional B cells into marginal zone B cells, probably by cleaving Notch. Responsible for the FasL ectodomain shedding and for the generation of the remnant ADAM10-processed FasL (FasL APL) transmembrane form. Also cleaves the ectodomain of the integral membrane proteins CORIN and ITM2B. Mediates the proteolytic cleavage of LAG3, leading to release the secreted form of LAG3. Mediates the proteolytic cleavage of IL6R and IL11RA, leading to the release of secreted forms of IL6R and IL11RA. Enhances the cleavage of CHL1 by BACE1. Cleaves NRCAM. Cleaves TREM2, resulting in shedding of the TREM2 ectodomain. Involved in the development and maturation of glomerular and coronary vasculature. During development of the cochlear organ of Corti, promotes pillar cell separation by forming a ternary complex with CADH1 and EPHA4 and cleaving CADH1 at adherens junctions. May regulate the EFNA5-EPHA3 signaling. The polypeptide is Disintegrin and metalloproteinase domain-containing protein 10 (Adam10) (Mus musculus (Mouse)).